Here is a 194-residue protein sequence, read N- to C-terminus: Holliday junction branch migration complex subunit RuvA (194 aa).

The tract at residues 1–64 is domain I; the sequence is MIGRLRGILA…EDSVALYGFL (64 aa). A domain II region spans residues 65–140; it reads REGERRLFRD…RAADFSSGAP (76 aa). Residues 140-144 form a flexible linker region; the sequence is PITGQ. A domain III region spans residues 145-194; it reads LGPDAVSEATVALQQLGYKPAEAARMARDAGAEGDEVATVIRKALQAALR.

Belongs to the RuvA family. In terms of assembly, homotetramer. Forms an RuvA(8)-RuvB(12)-Holliday junction (HJ) complex. HJ DNA is sandwiched between 2 RuvA tetramers; dsDNA enters through RuvA and exits via RuvB. An RuvB hexamer assembles on each DNA strand where it exits the tetramer. Each RuvB hexamer is contacted by two RuvA subunits (via domain III) on 2 adjacent RuvB subunits; this complex drives branch migration. In the full resolvosome a probable DNA-RuvA(4)-RuvB(12)-RuvC(2) complex forms which resolves the HJ.

Its subcellular location is the cytoplasm. In terms of biological role, the RuvA-RuvB-RuvC complex processes Holliday junction (HJ) DNA during genetic recombination and DNA repair, while the RuvA-RuvB complex plays an important role in the rescue of blocked DNA replication forks via replication fork reversal (RFR). RuvA specifically binds to HJ cruciform DNA, conferring on it an open structure. The RuvB hexamer acts as an ATP-dependent pump, pulling dsDNA into and through the RuvAB complex. HJ branch migration allows RuvC to scan DNA until it finds its consensus sequence, where it cleaves and resolves the cruciform DNA. The protein is Holliday junction branch migration complex subunit RuvA of Xanthomonas euvesicatoria pv. vesicatoria (strain 85-10) (Xanthomonas campestris pv. vesicatoria).